A 218-amino-acid chain; its full sequence is MEPGFWHEKWHQQQIGFHQQDINPFLVKYWQQLGLPADTQVFVPLCGKSLDMCFLAEQGHQVIGCELNELAVQHFFSDNQLEMTQTTVGEHQHYHTEQISLYQGDIFTLPKTITQAVTAFYDRAALIAWPESMRAQYAKQLASLLPSGSVGLLVTLDYPQEALSGPPFAVSPTWVEQHLSDDFDIEVLASQDVLADNPRFIKKAVPWLNEAAYLLKRK.

4 residues coordinate S-adenosyl-L-methionine: Trp10, Leu45, Glu66, and Arg123.

The protein belongs to the class I-like SAM-binding methyltransferase superfamily. TPMT family.

The protein resides in the cytoplasm. The enzyme catalyses S-adenosyl-L-methionine + a thiopurine = S-adenosyl-L-homocysteine + a thiopurine S-methylether.. The protein is Thiopurine S-methyltransferase of Shewanella baltica (strain OS185).